Here is a 470-residue protein sequence, read N- to C-terminus: uncharacterized protein (470 aa).

Residues 439 to 470 are disordered; the sequence is SIKSSKSKKQLKSSKSKKPIKHTKTKNIYVET. The span at 443–463 shows a compositional bias: basic residues; the sequence is SKSKKQLKSSKSKKPIKHTKT.

This is an uncharacterized protein from Acanthamoeba polyphaga mimivirus (APMV).